A 514-amino-acid polypeptide reads, in one-letter code: CBL-interacting protein kinase 25 (514 aa).

Positions 21 to 281 (YEFGPLVGEG…IPEIMEMRWF (261 aa)) constitute a Protein kinase domain. ATP contacts are provided by residues 27–35 (VGEGNFAKV) and K50. The active-site Proton acceptor is the D149. Positions 167 to 196 (DFGLSALADMERREAHLQTVCGTPLFLAPE) are activation loop. Residues 303-340 (GLDGEPELYDSDTDTIESSSSSESPTPVAGTPRGMHTS) form a disordered region. A compositionally biased stretch (acidic residues) spans 304–317 (LDGEPELYDSDTDT). Residues 318 to 329 (IESSSSSESPTP) are compositionally biased toward low complexity. One can recognise an NAF domain in the interval 323–395 (SSESPTPVAG…PSFDLSGLFE (73 aa)). The PPI stretch occupies residues 398–427 (GERMRFVSGAPVADIIAKLQEIAGMVSFTA).

Belongs to the protein kinase superfamily. CAMK Ser/Thr protein kinase family. SNF1 subfamily. Mn(2+) is required as a cofactor.

The catalysed reaction is L-seryl-[protein] + ATP = O-phospho-L-seryl-[protein] + ADP + H(+). It catalyses the reaction L-threonyl-[protein] + ATP = O-phospho-L-threonyl-[protein] + ADP + H(+). Its function is as follows. CIPK serine-threonine protein kinases interact with CBL proteins. Binding of a CBL protein to the regulatory NAF domain of CIPK protein lead to the activation of the kinase in a calcium-dependent manner. This is CBL-interacting protein kinase 25 (CIPK25) from Oryza sativa subsp. japonica (Rice).